The sequence spans 466 residues: Asparagine--tRNA ligase (466 aa).

It belongs to the class-II aminoacyl-tRNA synthetase family. In terms of assembly, homodimer.

Its subcellular location is the cytoplasm. The catalysed reaction is tRNA(Asn) + L-asparagine + ATP = L-asparaginyl-tRNA(Asn) + AMP + diphosphate + H(+). The protein is Asparagine--tRNA ligase of Serratia proteamaculans (strain 568).